Consider the following 169-residue polypeptide: Endoribonuclease YbeY (169 aa).

Residues His-135, His-139, and His-145 each contribute to the Zn(2+) site.

The protein belongs to the endoribonuclease YbeY family. Zn(2+) serves as cofactor.

It is found in the cytoplasm. Single strand-specific metallo-endoribonuclease involved in late-stage 70S ribosome quality control and in maturation of the 3' terminus of the 16S rRNA. The chain is Endoribonuclease YbeY from Lachnospira eligens (strain ATCC 27750 / DSM 3376 / VPI C15-48 / C15-B4) (Eubacterium eligens).